The following is a 494-amino-acid chain: Ubiquitin carboxyl-terminal hydrolase 27 (494 aa).

Residues 30–50 form a helical membrane-spanning segment; the sequence is LSFAGLLGVAGFVFAQQHGLF. One can recognise a USP domain in the interval 74-494; the sequence is PGLQNLGNNC…EASLLFYERL (421 aa). Cys-83 serves as the catalytic Nucleophile. His-440 serves as the catalytic Proton acceptor.

It belongs to the peptidase C19 family.

It is found in the membrane. The enzyme catalyses Thiol-dependent hydrolysis of ester, thioester, amide, peptide and isopeptide bonds formed by the C-terminal Gly of ubiquitin (a 76-residue protein attached to proteins as an intracellular targeting signal).. Recognizes and hydrolyzes the peptide bond at the C-terminal Gly of ubiquitin. Involved in the processing of poly-ubiquitin precursors as well as that of ubiquitinated proteins. In Arabidopsis thaliana (Mouse-ear cress), this protein is Ubiquitin carboxyl-terminal hydrolase 27 (UBP27).